A 197-amino-acid chain; its full sequence is Protein Hikeshi (197 aa).

A required for F-X-F-G repeats-nucleoporins recognition and nuclear import region spans residues 18 to 55; that stretch reads VAEDKFVFDLPDYENINHVVVFMLGTIPFPEGMGGSVY. The segment at 124-134 is flexible linker region involved in nuclear import of HSP70 proteins; the sequence is QTPVGSAAVSS.

It belongs to the OPI10 family. As to quaternary structure, forms an asymmetric homodimer; required for binding and nuclear import of HSP70 proteins. Interacts with ATP-bound HSP70 proteins. Interacts with NUP62 and NUP153 (via F-X-F-G repeats). Interacts with HSPA8. Expressed in the central white matter of newborn and adult brain, particularly in regions where oligodendrocytes are generated.

It localises to the cytoplasm. Its subcellular location is the cytosol. It is found in the nucleus. Acts as a specific nuclear import carrier for HSP70 proteins following heat-shock stress: acts by mediating the nucleoporin-dependent translocation of ATP-bound HSP70 proteins into the nucleus. HSP70 proteins import is required to protect cells from heat shock damages. Does not translocate ADP-bound HSP70 proteins into the nucleus. May also be indirectly required for organization and/or function of the secretory apparatus in Club cells in lung. In Mus musculus (Mouse), this protein is Protein Hikeshi.